The sequence spans 159 residues: Ribosomal RNA large subunit methyltransferase H (159 aa).

S-adenosyl-L-methionine contacts are provided by residues L76, G108, and 127–132 (FSKMTF).

The protein belongs to the RNA methyltransferase RlmH family. In terms of assembly, homodimer.

It is found in the cytoplasm. The enzyme catalyses pseudouridine(1915) in 23S rRNA + S-adenosyl-L-methionine = N(3)-methylpseudouridine(1915) in 23S rRNA + S-adenosyl-L-homocysteine + H(+). Functionally, specifically methylates the pseudouridine at position 1915 (m3Psi1915) in 23S rRNA. This chain is Ribosomal RNA large subunit methyltransferase H, found in Exiguobacterium sibiricum (strain DSM 17290 / CCUG 55495 / CIP 109462 / JCM 13490 / 255-15).